A 648-amino-acid chain; its full sequence is Threonine--tRNA ligase (648 aa).

The TGS domain maps to 1 to 61 (MIKITLPDGS…TTDGNLILYT (61 aa)). A catalytic region spans residues 240–539 (DHRKLGKELE…LLEHTAGNFP (300 aa)). Zn(2+)-binding residues include Cys335, His386, and His516.

Belongs to the class-II aminoacyl-tRNA synthetase family. As to quaternary structure, homodimer. Requires Zn(2+) as cofactor.

The protein localises to the cytoplasm. The catalysed reaction is tRNA(Thr) + L-threonine + ATP = L-threonyl-tRNA(Thr) + AMP + diphosphate + H(+). In terms of biological role, catalyzes the attachment of threonine to tRNA(Thr) in a two-step reaction: L-threonine is first activated by ATP to form Thr-AMP and then transferred to the acceptor end of tRNA(Thr). Also edits incorrectly charged L-seryl-tRNA(Thr). In Flavobacterium johnsoniae (strain ATCC 17061 / DSM 2064 / JCM 8514 / BCRC 14874 / CCUG 350202 / NBRC 14942 / NCIMB 11054 / UW101) (Cytophaga johnsonae), this protein is Threonine--tRNA ligase.